The primary structure comprises 259 residues: NADP-dependent 3-hydroxy acid dehydrogenase (259 aa).

Residue Ile11 coordinates NADP(+). Ser42 carries the post-translational modification Phosphoserine. Residue Thr43 is modified to Phosphothreonine. NADP(+)-binding residues include Asp65, Asn92, Arg126, Tyr158, Lys162, and Val191. Tyr158 (proton acceptor) is an active-site residue. Catalysis depends on Lys162, which acts as the Lowers pKa of active site Tyr.

The protein belongs to the short-chain dehydrogenases/reductases (SDR) family. In terms of assembly, homotetramer.

The protein resides in the cytoplasm. It is found in the nucleus. The catalysed reaction is L-allo-threonine + NADP(+) = aminoacetone + CO2 + NADPH. In terms of biological role, NADP-dependent dehydrogenase with broad substrate specificity acting on 3-hydroxy acids. Catalyzes the NADP-dependent oxidation of L-allo-threonine to L-2-amino-3-keto-butyrate, which is spontaneously decarboxylated into aminoacetone. Also acts on D-threonine, L-serine, D-serine, D-3-hydroxyisobutyrate, L-3-hydroxyisobutyrate, D-glycerate and L-glycerate. The sequence is that of NADP-dependent 3-hydroxy acid dehydrogenase from Schizosaccharomyces pombe (strain 972 / ATCC 24843) (Fission yeast).